The sequence spans 376 residues: Dehydrogenase/reductase SDR family member FEY (376 aa).

Ser-2 bears the N-acetylserine mark. 61 to 85 (VVTGSTSGIGRETARQLAEAGAHVV) is a binding site for NAD(+). Position 199 (Ser-199) interacts with substrate. The active-site Proton acceptor is the Tyr-227.

Belongs to the short-chain dehydrogenases/reductases (SDR) family. Expressed in roots, stems, leaves and flowers and, at lower levels, in siliques.

In terms of biological role, putative oxidoreductase. Required for vegetative shoot apex development, especially during leaf positioning and for shoot apical meristem (SAM) maintenance. In Arabidopsis thaliana (Mouse-ear cress), this protein is Dehydrogenase/reductase SDR family member FEY.